Here is a 436-residue protein sequence, read N- to C-terminus: 3-ketoacyl-CoA thiolase (436 aa).

C99 serves as the catalytic Acyl-thioester intermediate. Catalysis depends on proton acceptor residues H392 and C422.

The protein belongs to the thiolase-like superfamily. Thiolase family. Heterotetramer of two alpha chains (FadJ) and two beta chains (FadI).

It localises to the cytoplasm. The catalysed reaction is an acyl-CoA + acetyl-CoA = a 3-oxoacyl-CoA + CoA. The protein operates within lipid metabolism; fatty acid beta-oxidation. Its function is as follows. Catalyzes the final step of fatty acid oxidation in which acetyl-CoA is released and the CoA ester of a fatty acid two carbons shorter is formed. The sequence is that of 3-ketoacyl-CoA thiolase from Shewanella halifaxensis (strain HAW-EB4).